The primary structure comprises 147 residues: Nucleoside diphosphate kinase (147 aa).

The ATP site is built by K9, F57, R85, T91, R102, and N112. Catalysis depends on H115, which acts as the Pros-phosphohistidine intermediate.

Belongs to the NDK family. As to quaternary structure, homotetramer. Requires Mg(2+) as cofactor.

Its subcellular location is the cytoplasm. It carries out the reaction a 2'-deoxyribonucleoside 5'-diphosphate + ATP = a 2'-deoxyribonucleoside 5'-triphosphate + ADP. The enzyme catalyses a ribonucleoside 5'-diphosphate + ATP = a ribonucleoside 5'-triphosphate + ADP. Its function is as follows. Major role in the synthesis of nucleoside triphosphates other than ATP. The ATP gamma phosphate is transferred to the NDP beta phosphate via a ping-pong mechanism, using a phosphorylated active-site intermediate. The protein is Nucleoside diphosphate kinase of Fervidobacterium nodosum (strain ATCC 35602 / DSM 5306 / Rt17-B1).